A 432-amino-acid polypeptide reads, in one-letter code: C2H2 type master regulator of conidiophore development brlA (432 aa).

2 disordered regions span residues 22 to 72 (SNEC…RTPG) and 238 to 260 (KQHSPTTPIRSCSLGTGSGADTP). Positions 29-44 (TSSFSPLESPTPTPTS) are enriched in low complexity. Composition is skewed to polar residues over residues 62 to 72 (LPNNTYERTPG) and 238 to 252 (KQHSPTTPIRSCSLG). 2 C2H2-type zinc fingers span residues 320–344 (FKCKEPGCNGRFKRQEHLKRHMKSH) and 350–375 (HVCWVPGCHRAFSRSDNLNAHYTKTH). The tract at residues 388 to 432 (LDENSPDYDPEFRGQLTPDGRPIYGSKLDDPIPGAGDMSLDGWDE) is disordered.

Its subcellular location is the nucleus. Functionally, brlA, abaA and wetA are pivotal regulators of conidiophore development and conidium maturation. They act individually and together to regulate their own expression and that of numerous other sporulation-specific genes. Binds promoters of target genes at brlA response elements (BREs) containing the conserved sequence 5'-(C/A)(A/G)AGGG(G/A)-3'. Controls the expression of the conidiophore-specific phenol oxidase ivoB. Controls the expression of the hydrophobin rodA. Mediates the developmental switch from the indeterminate, apical growth pattern of vegetative cells to the budding growth pattern of conidiophores. Expression of brlA leads to activation of abaA, wetA and stuA, cessation of vegetative growth, cellular vacuolization and spore formation. The sequence is that of C2H2 type master regulator of conidiophore development brlA from Emericella nidulans (strain FGSC A4 / ATCC 38163 / CBS 112.46 / NRRL 194 / M139) (Aspergillus nidulans).